The chain runs to 311 residues: Non-homologous end joining protein Ku (311 aa).

The Ku domain maps to 26–210 (ISFGLVNIPI…NVNDKELQTA (185 aa)). Positions 269-311 (ASIDRTRRPNRETPAAAPAQAAEPKGAGDKKQKTTRKKASGTS) are disordered. Residues 282-293 (PAAAPAQAAEPK) are compositionally biased toward low complexity. Positions 301–311 (KTTRKKASGTS) are enriched in basic residues.

It belongs to the prokaryotic Ku family. As to quaternary structure, homodimer. Interacts with LigD.

The protein localises to the spore core. Functionally, with LigD forms a non-homologous end joining (NHEJ) DNA repair enzyme, which repairs dsDNA breaks with reduced fidelity. Binds linear dsDNA with 5'- and 3'- overhangs but not closed circular dsDNA nor ssDNA. Recruits and stimulates the ligase activity of LigD. Probably involved in DNA repair during spore germination. This Bacillus subtilis (strain 168) protein is Non-homologous end joining protein Ku.